We begin with the raw amino-acid sequence, 409 residues long: Ligand-gated cation channel ZACN (409 aa).

The first 18 residues, 1–18 (MAPRLLLLLLAFLRLGTT), serve as a signal peptide directing secretion. Topologically, residues 19–233 (GPLVQGRGFR…LRLQNTALKA (215 aa)) are extracellular. N-linked (GlcNAc...) asparagine glycans are attached at residues Asn-55 and Asn-99. Cysteines 157 and 171 form a disulfide. The helical transmembrane segment at 234-254 (IIALLVPGEALLLADMCGGLL) threads the bilayer. At 255-265 (PLRATERIAYK) the chain is on the cytoplasmic side. A helical membrane pass occupies residues 266–286 (VTLLLGYLVFHSSLVQALPSS). Over 287–296 (SSCNPLLIYY) the chain is Extracellular. Residues 297 to 317 (FTVLLLLLFISTMETVLLAAL) traverse the membrane as a helical segment. The Cytoplasmic portion of the chain corresponds to 318-365 (QARGHLSARSSPIPTPRGEQQDHGDLGPHPEEAPGVKESRSWAEAADH). The segment at 325 to 354 (ARSSPIPTPRGEQQDHGDLGPHPEEAPGVK) is disordered. Over residues 336-354 (EQQDHGDLGPHPEEAPGVK) the composition is skewed to basic and acidic residues. Residues 366–386 (IFFLVYVVGVVCSQFFFIGFW) traverse the membrane as a helical segment. Topologically, residues 387–409 (MWATCKSDPAPGEAIPHGGQPRL) are extracellular.

It belongs to the ligand-gated ion channel (TC 1.A.9) family. In terms of processing, glycosylated.

The protein resides in the cell membrane. It catalyses the reaction Na(+)(in) = Na(+)(out). The enzyme catalyses K(+)(in) = K(+)(out). Functionally, ligand-gated cation channel that allows the movement of sodium and potassium monoatomic cations across cell membranes when activated by zinc (Zn2+), copper (Cu2+), and changes in pH. Could also transport cesium. The protein is Ligand-gated cation channel ZACN of Canis lupus familiaris (Dog).